We begin with the raw amino-acid sequence, 362 residues long: 5'-tyrosyl-DNA phosphodiesterase (362 aa).

The span at 1 to 10 (MSNSDDEIQE) shows a compositional bias: acidic residues. Residues 1 to 43 (MSNSDDEIQEIEAKRQKMSQEDSEVEIEILDEPEQGKLKNSSM) are disordered. Over residues 11–20 (IEAKRQKMSQ) the composition is skewed to basic and acidic residues. A compositionally biased stretch (acidic residues) spans 21 to 33 (EDSEVEIEILDEP). Residues 126–130 (NIDGL) are interaction with 5' end of substrate DNA. Mg(2+) contacts are provided by aspartate 128 and glutamate 158. The interaction with 5' end of substrate DNA stretch occupies residues 232–237 (HLESTR). Aspartate 271 functions as the Proton donor/acceptor in the catalytic mechanism. Residues 273–275 (NLR) are interaction with 5' end of substrate DNA.

The protein belongs to the CCR4/nocturin family. TTRAP/TDP2 subfamily. Interacts with mxl-1; the interaction promotes axon regeneration after injury. Interacts with ets-4; the interaction is required for the sumoylation of ets-4. It depends on Mg(2+) as a cofactor. Mn(2+) is required as a cofactor.

It localises to the nucleus. It is found in the PML body. DNA repair enzyme that can remove a variety of covalent adducts from DNA through hydrolysis of a 5'-phosphodiester bond, giving rise to DNA with a free 5' phosphate. Catalyzes the hydrolysis of dead-end complexes between DNA and the topoisomerase 2 (top2) active site tyrosine residue. Hydrolyzes 5'-phosphoglycolates on protruding 5' ends on DNA double-strand breaks (DSBs) due to DNA damage by radiation and free radicals. Inhibits axon regeneration after neuronal injury by promoting the sumoylation of ets-4, thereby inhibiting the phosphorylation of ets-4 required for probable interaction with cebp-1 and activation of svh-2 expression. The polypeptide is 5'-tyrosyl-DNA phosphodiesterase (Caenorhabditis elegans).